The chain runs to 566 residues: MDGTAESREGTQFGPYRLRRLVGRGGMGDVYEAEDTVRERIVALKLMSETLSSDPDFRTRMQREARTAGRLQEPHVVPIHDFGEIDGQLYVDMRLINGVDLAAMLRRQGPLAPPRAVAIVRQIGSALDAAHAAGATHRDVKPENILVSADDFAYLVDFGIASATTDEKLTQLGNTVGTLYYMAPERFSESHATYRADIYALTCVLYECLTGSPPYQGDQLSVMGAHINQAIPRPSTVRPGIPVAFDAVIARGMAKNPEDRYVTCGDLSAAAHAALATADQDRATDILRRSQVAKLPVPSTHPVSPGTRWPQPTPWAGGAPPWGPPSSPLPRSARQPWLWVGVAVAVVVALAGGLGIALAHPWRSSGPRTSAPPPPPPADAVELRVLNDGVFVGSSVAPTTIDIFNEPICPPCGSFIRSYASDIDTAVADKQLAVRYHLLNFLDDQSHSKNYSTRAVAASYCVAGQNDPKLYASFYSALFGSDFQPQENAASDRTDAELAHLAQTVGAEPTAISCIKSGADLGTAQTKATNASETLAGFNASGTPFVWDGSMVVNYQDPSWLARLIG.

The Cytoplasmic portion of the chain corresponds to 1–337 (MDGTAESREG…PLPRSARQPW (337 aa)). S7 bears the Phosphoserine; by autocatalysis mark. At T11 the chain carries Phosphothreonine; by autocatalysis. The region spanning 16–275 (YRLRRLVGRG…DLSAAAHAAL (260 aa)) is the Protein kinase domain. ATP-binding positions include 22–30 (VGRGGMGDV) and K45. 2 positions are modified to phosphothreonine; by autocatalysis: T50 and T59. The Proton acceptor role is filled by D139. Phosphothreonine; by autocatalysis occurs at positions 170, 175, and 178. The disordered stretch occupies residues 296–330 (PVPSTHPVSPGTRWPQPTPWAGGAPPWGPPSSPLP). A helical membrane pass occupies residues 338 to 358 (LWVGVAVAVVVALAGGLGIAL). Topologically, residues 359-566 (AHPWRSSGPR…DPSWLARLIG (208 aa)) are extracellular.

Belongs to the protein kinase superfamily. Ser/Thr protein kinase family. Post-translationally, autophosphorylated on serine and threonine residues. Dephosphorylated by PstP.

It localises to the cell membrane. The catalysed reaction is L-seryl-[protein] + ATP = O-phospho-L-seryl-[protein] + ADP + H(+). It catalyses the reaction L-threonyl-[protein] + ATP = O-phospho-L-threonyl-[protein] + ADP + H(+). In Mycobacterium bovis (strain ATCC BAA-935 / AF2122/97), this protein is Serine/threonine-protein kinase PknE (pknE).